We begin with the raw amino-acid sequence, 205 residues long: Putative protein phosphatase inhibitor 2-like protein 1 (205 aa).

4 disordered regions span residues 1–44, 64–92, 107–148, and 171–205; these read MAAS…SKKS, GLMK…TETT, AEGL…TLHY, and VEEM…SRSS. 2 required for binding PPP1CC regions span residues 12-17 and 43-55; these read KGILKD and KSQK…ILAT. The span at 17 to 26 shows a compositional bias: polar residues; that stretch reads DNTSTTSSMV. Basic and acidic residues predominate over residues 30–44; it reads EHPRGSVHEQLSKKS. Threonine 73 carries the phosphothreonine; by GSK3 modification. Composition is skewed to acidic residues over residues 80-91 and 121-130; these read GDDEDACSDTET and SSGEEDSDLS. Serine 87 is subject to Phosphoserine; by CK2. Residues 131–144 show a composition bias toward basic and acidic residues; it reads PEEREKKRQFEMRR. The tract at residues 147-150 is required for binding PPP1CC catalytic center, displacing metal ions and inhibition of PPP1CC catalytic activity; that stretch reads HYNE. Positions 182 to 205 are enriched in polar residues; it reads SMNTEESNQGSTASDQQQNKSRSS.

Belongs to the protein phosphatase inhibitor 2 family.

Inhibitor of protein-phosphatase 1. This is Putative protein phosphatase inhibitor 2-like protein 1 (PPP1R2P1) from Homo sapiens (Human).